Reading from the N-terminus, the 501-residue chain is Probable cytosol aminopeptidase (501 aa).

2 residues coordinate Mn(2+): K268 and D273. Residue K280 is part of the active site. 3 residues coordinate Mn(2+): D291, D350, and E352. R354 is a catalytic residue.

The protein belongs to the peptidase M17 family. Mn(2+) serves as cofactor.

Its subcellular location is the cytoplasm. It carries out the reaction Release of an N-terminal amino acid, Xaa-|-Yaa-, in which Xaa is preferably Leu, but may be other amino acids including Pro although not Arg or Lys, and Yaa may be Pro. Amino acid amides and methyl esters are also readily hydrolyzed, but rates on arylamides are exceedingly low.. The catalysed reaction is Release of an N-terminal amino acid, preferentially leucine, but not glutamic or aspartic acids.. In terms of biological role, presumably involved in the processing and regular turnover of intracellular proteins. Catalyzes the removal of unsubstituted N-terminal amino acids from various peptides. The sequence is that of Probable cytosol aminopeptidase from Idiomarina loihiensis (strain ATCC BAA-735 / DSM 15497 / L2-TR).